The chain runs to 128 residues: Large ribosomal subunit protein uL22 (128 aa).

The segment at 1-22 (MARGHRSQIKRERNANKDTRPS) is disordered. Residues 9–21 (IKRERNANKDTRP) show a composition bias toward basic and acidic residues.

It belongs to the universal ribosomal protein uL22 family. In terms of assembly, part of the 50S ribosomal subunit.

Its function is as follows. This protein binds specifically to 23S rRNA; its binding is stimulated by other ribosomal proteins, e.g. L4, L17, and L20. It is important during the early stages of 50S assembly. It makes multiple contacts with different domains of the 23S rRNA in the assembled 50S subunit and ribosome. The globular domain of the protein is located near the polypeptide exit tunnel on the outside of the subunit, while an extended beta-hairpin is found that lines the wall of the exit tunnel in the center of the 70S ribosome. This Lachnoclostridium phytofermentans (strain ATCC 700394 / DSM 18823 / ISDg) (Clostridium phytofermentans) protein is Large ribosomal subunit protein uL22.